The chain runs to 157 residues: ASHANLAIDQISEQNFQPRIHVVKGFSISTAVVCHQCEDAPCANVCPNGAIIHNKDYYYVDQDKCIGCKTCVLACPYGTMEVVSRPVMRKLTALNTIEAFKAEANKCDLCHHRAEGPACVEVCPTQALVCIDRDALEDMVKERRRKAAFETGADLLF.

3 consecutive 4Fe-4S ferredoxin-type domains span residues 24–55 (KGFS…IHNK), 56–85 (DYYY…VVSR), and 100–133 (FKAE…CIDR). Residues Cys34, Cys37, Cys42, Cys46, Cys65, Cys68, Cys71, Cys75, Cys107, Cys110, Cys119, and Cys123 each contribute to the [4Fe-4S] cluster site.

This chain is Frd operon probable iron-sulfur subunit A, found in Proteus vulgaris.